The chain runs to 198 residues: NADH-quinone oxidoreductase subunit B (198 aa).

The [4Fe-4S] cluster site is built by C62, C63, C128, and C158.

This sequence belongs to the complex I 20 kDa subunit family. In terms of assembly, NDH-1 is composed of 14 different subunits. Subunits NuoB, C, D, E, F, and G constitute the peripheral sector of the complex. [4Fe-4S] cluster is required as a cofactor.

The protein resides in the cell inner membrane. It carries out the reaction a quinone + NADH + 5 H(+)(in) = a quinol + NAD(+) + 4 H(+)(out). NDH-1 shuttles electrons from NADH, via FMN and iron-sulfur (Fe-S) centers, to quinones in the respiratory chain. The immediate electron acceptor for the enzyme in this species is believed to be a menaquinone. Couples the redox reaction to proton translocation (for every two electrons transferred, four hydrogen ions are translocated across the cytoplasmic membrane), and thus conserves the redox energy in a proton gradient. The sequence is that of NADH-quinone oxidoreductase subunit B from Phocaeicola vulgatus (strain ATCC 8482 / DSM 1447 / JCM 5826 / CCUG 4940 / NBRC 14291 / NCTC 11154) (Bacteroides vulgatus).